Here is a 767-residue protein sequence, read N- to C-terminus: Granule-bound starch synthase 2, chloroplastic/amyloplastic (767 aa).

A chloroplast-targeting transit peptide spans 1 to 45 (MENSILLHSGNQFHPNLPLLALRPKKLSLIHGSSREQMWRIKRVK). 2 disordered regions span residues 160-204 (KRDL…SSQE) and 226-268 (YMPS…EKPP). Residues 172–188 (SRSSITASSQISSTVSS) show a composition bias toward low complexity. Residues 230 to 245 (LRKESSASHVEQRNEN) show a composition bias toward basic and acidic residues. Acidic residues predominate over residues 253–262 (ANEETEDPVN). Position 290 (K290) interacts with ADP-alpha-D-glucose.

This sequence belongs to the glycosyltransferase 1 family. Bacterial/plant glycogen synthase subfamily.

It is found in the plastid. The protein resides in the chloroplast. Its subcellular location is the amyloplast. It catalyses the reaction [(1-&gt;4)-alpha-D-glucosyl](n) + ADP-alpha-D-glucose = [(1-&gt;4)-alpha-D-glucosyl](n+1) + ADP + H(+). It participates in glycan biosynthesis; starch biosynthesis. Accounts for only 10 to 15% of the total soluble starch synthase activity in tubers. The polypeptide is Granule-bound starch synthase 2, chloroplastic/amyloplastic (SS2) (Solanum tuberosum (Potato)).